A 115-amino-acid chain; its full sequence is Cell division topological specificity factor (115 aa).

Residues 93–115 are disordered; that stretch reads QLKEPKNQSELDSPETEGTDQKS. Residues 104–115 are compositionally biased toward acidic residues; the sequence is DSPETEGTDQKS.

Belongs to the MinE family.

In terms of biological role, prevents the cell division inhibition by proteins MinC and MinD at internal division sites while permitting inhibition at polar sites. This ensures cell division at the proper site by restricting the formation of a division septum at the midpoint of the long axis of the cell. The polypeptide is Cell division topological specificity factor (Prochlorococcus marinus (strain NATL1A)).